Here is a 405-residue protein sequence, read N- to C-terminus: Venom serine protease 34 (405 aa).

The N-terminal stretch at 1–35 is a signal peptide; it reads MIFTNNIAAFQNVVLVKKVKIVLLIFYGSIMFSMT. Intrachain disulfides connect Cys42-Cys70 and Cys95-Cys111. The CUB domain maps to 42 to 147; it reads CDYYQNLNLG…EVRPIKRVKD (106 aa). N-linked (GlcNAc...) asparagine glycosylation is present at Asn113. Residues 161 to 397 enclose the Peptidase S1 domain; it reads IVGGTNTGIN…YIDWIVSQTP (237 aa). The cysteines at positions 188 and 204 are disulfide-linked. His203 serves as the catalytic Charge relay system. N-linked (GlcNAc...) asparagine glycosylation is found at Asn209 and Asn229. Asp257 serves as the catalytic Charge relay system. 2 disulfide bridges follow: Cys323–Cys336 and Cys345–Cys375. The active-site Charge relay system is Ser349.

It belongs to the peptidase S1 family. Expressed by the venom duct.

The protein resides in the secreted. This Apis mellifera (Honeybee) protein is Venom serine protease 34.